A 446-amino-acid chain; its full sequence is Exodeoxyribonuclease 7 large subunit (446 aa).

It belongs to the XseA family. Heterooligomer composed of large and small subunits.

The protein localises to the cytoplasm. The enzyme catalyses Exonucleolytic cleavage in either 5'- to 3'- or 3'- to 5'-direction to yield nucleoside 5'-phosphates.. Functionally, bidirectionally degrades single-stranded DNA into large acid-insoluble oligonucleotides, which are then degraded further into small acid-soluble oligonucleotides. The protein is Exodeoxyribonuclease 7 large subunit of Streptococcus pyogenes serotype M49 (strain NZ131).